Here is a 232-residue protein sequence, read N- to C-terminus: Orotidine 5'-phosphate decarboxylase (232 aa).

Substrate contacts are provided by residues aspartate 13, lysine 35, 62-71 (DLKFHDIPNT), threonine 122, arginine 182, glutamine 191, glycine 211, and arginine 212. The Proton donor role is filled by lysine 64.

This sequence belongs to the OMP decarboxylase family. Type 1 subfamily. In terms of assembly, homodimer.

It catalyses the reaction orotidine 5'-phosphate + H(+) = UMP + CO2. The protein operates within pyrimidine metabolism; UMP biosynthesis via de novo pathway; UMP from orotate: step 2/2. Catalyzes the decarboxylation of orotidine 5'-monophosphate (OMP) to uridine 5'-monophosphate (UMP). In Pseudomonas syringae pv. syringae (strain B728a), this protein is Orotidine 5'-phosphate decarboxylase.